A 590-amino-acid chain; its full sequence is Urease subunit alpha (590 aa).

The Urease domain occupies 134–590; it reads GGIDSHIHFI…LPLAQRYFLF (457 aa). Ni(2+) contacts are provided by H139, H141, and K222. K222 is modified (N6-carboxylysine). H224 contacts substrate. H251 and H277 together coordinate Ni(2+). H325 serves as the catalytic Proton donor. Residue D365 coordinates Ni(2+). The segment at 388–416 is disordered; the sequence is QQRGWLSPPAAGQGAGLSSAAGQGVDHDT. Residues 393-411 are compositionally biased toward low complexity; the sequence is LSPPAAGQGAGLSSAAGQG.

It belongs to the metallo-dependent hydrolases superfamily. Urease alpha subunit family. Heterotrimer of UreA (gamma), UreB (beta) and UreC (alpha) subunits. Three heterotrimers associate to form the active enzyme. The cofactor is Ni cation. Post-translationally, carboxylation allows a single lysine to coordinate two nickel ions.

Its subcellular location is the cytoplasm. The enzyme catalyses urea + 2 H2O + H(+) = hydrogencarbonate + 2 NH4(+). It participates in nitrogen metabolism; urea degradation; CO(2) and NH(3) from urea (urease route): step 1/1. This chain is Urease subunit alpha, found in Verminephrobacter eiseniae (strain EF01-2).